The following is a 154-amino-acid chain: Xanthine-guanine phosphoribosyltransferase (154 aa).

Residues 37-38 (RG), Arg69, and 88-96 (DDLVDSGDT) contribute to the 5-phospho-alpha-D-ribose 1-diphosphate site. Position 69 (Arg69) interacts with GMP. Residue Asp89 participates in Mg(2+) binding. 2 residues coordinate guanine: Asp92 and Ile135. Asp92 and Ile135 together coordinate xanthine. Residues 92–96 (DSGDT) and 134–135 (WI) each bind GMP.

It belongs to the purine/pyrimidine phosphoribosyltransferase family. XGPT subfamily. Homotetramer. Mg(2+) serves as cofactor.

Its subcellular location is the cell inner membrane. It catalyses the reaction GMP + diphosphate = guanine + 5-phospho-alpha-D-ribose 1-diphosphate. The catalysed reaction is XMP + diphosphate = xanthine + 5-phospho-alpha-D-ribose 1-diphosphate. The enzyme catalyses IMP + diphosphate = hypoxanthine + 5-phospho-alpha-D-ribose 1-diphosphate. The protein operates within purine metabolism; GMP biosynthesis via salvage pathway; GMP from guanine: step 1/1. It functions in the pathway purine metabolism; XMP biosynthesis via salvage pathway; XMP from xanthine: step 1/1. In terms of biological role, purine salvage pathway enzyme that catalyzes the transfer of the ribosyl-5-phosphate group from 5-phospho-alpha-D-ribose 1-diphosphate (PRPP) to the N9 position of the 6-oxopurines guanine and xanthine to form the corresponding ribonucleotides GMP (guanosine 5'-monophosphate) and XMP (xanthosine 5'-monophosphate), with the release of PPi. To a lesser extent, also acts on hypoxanthine. This chain is Xanthine-guanine phosphoribosyltransferase, found in Vibrio cholerae serotype O1 (strain ATCC 39541 / Classical Ogawa 395 / O395).